Reading from the N-terminus, the 327-residue chain is Phenylalanine--tRNA ligase alpha subunit (327 aa).

Glu252 provides a ligand contact to Mg(2+).

Belongs to the class-II aminoacyl-tRNA synthetase family. Phe-tRNA synthetase alpha subunit type 1 subfamily. As to quaternary structure, tetramer of two alpha and two beta subunits. The cofactor is Mg(2+).

It localises to the cytoplasm. The enzyme catalyses tRNA(Phe) + L-phenylalanine + ATP = L-phenylalanyl-tRNA(Phe) + AMP + diphosphate + H(+). This is Phenylalanine--tRNA ligase alpha subunit from Escherichia coli O139:H28 (strain E24377A / ETEC).